The primary structure comprises 1132 residues: Tyrosine-protein kinase JAK2 (1132 aa).

The tract at residues 1–239 (MGMACLTMTE…RYRFRRFIQQ (239 aa)) is interaction with cytokine/interferon/growth hormone receptors. Positions 37–380 (PVLQVYLYHS…GYYRLTADAH (344 aa)) constitute an FERM domain. Tyrosine 119 carries the phosphotyrosine; by autocatalysis modification. 2 positions are modified to phosphotyrosine: tyrosine 372 and tyrosine 373. One can recognise an SH2; atypical domain in the interval 401-482 (HGPISMDFAI…SLKDLLNCYQ (82 aa)). The residue at position 523 (serine 523) is a Phosphoserine. The Protein kinase 1 domain occupies 545-809 (LIFNESLGQG…AVIRDLNSLF (265 aa)). A phosphotyrosine mark is found at tyrosine 570 and tyrosine 813. Positions 849–1126 (LKFLQQLGKG…RDLSLRVDQI (278 aa)) constitute a Protein kinase 2 domain. 855–863 (LGKGNFGSV) contributes to the ATP binding site. Position 868 is a phosphotyrosine; by autocatalysis (tyrosine 868). Lysine 882 is a binding site for ATP. Tyrosine 966 and tyrosine 972 each carry phosphotyrosine; by autocatalysis. Aspartate 976 (proton acceptor) is an active-site residue. A phosphotyrosine; by autocatalysis mark is found at tyrosine 1007 and tyrosine 1008.

This sequence belongs to the protein kinase superfamily. Tyr protein kinase family. JAK subfamily. Interacts with IL23R, SKB1 and STAM2. Interacts with EPOR. Interacts with LYN. Interacts with SIRPA. Interacts with SH2B1. Interacts with TEC. Interacts with IFNGR2 (via intracellular domain). Interacts with LEPR (Isoform B). Interacts with HSP90AB1; promotes functional activation in a heat shock-dependent manner. Interacts with STRA6. Interacts with ASB2; the interaction targets JAK2 for Notch-induced proteasomal degradation. Mg(2+) serves as cofactor. Post-translationally, autophosphorylated, leading to regulate its activity. Leptin promotes phosphorylation on tyrosine residues, including phosphorylation on Tyr-813. Autophosphorylation on Tyr-119 in response to EPO down-regulates its kinase activity. Autophosphorylation on Tyr-868, Tyr-966 and Tyr-972 in response to growth hormone (GH) are required for maximal kinase activity. Also phosphorylated by TEC. Phosphorylated on tyrosine residues in response to interferon gamma signaling. Phosphorylated on tyrosine residues in response to a signaling cascade that is activated by increased cellular retinol. Undergoes Notch-induced ubiquitination and subsequent proteasomal degradation which is mediated by ASB1 or ASB2, the substrate-recognition components of probable ECS E3 ubiquitin-protein ligase complexes. As to expression, ubiquitously expressed throughout most tissues.

Its subcellular location is the endomembrane system. The protein localises to the cytoplasm. The protein resides in the nucleus. It carries out the reaction L-tyrosyl-[protein] + ATP = O-phospho-L-tyrosyl-[protein] + ADP + H(+). Regulated by autophosphorylation, can both activate or decrease activity. Heme regulates its activity by enhancing the phosphorylation on Tyr-1007 and Tyr-1008. In terms of biological role, non-receptor tyrosine kinase involved in various processes such as cell growth, development, differentiation or histone modifications. Mediates essential signaling events in both innate and adaptive immunity. In the cytoplasm, plays a pivotal role in signal transduction via its association with type I receptors such as growth hormone (GHR), prolactin (PRLR), leptin (LEPR), erythropoietin (EPOR), thrombopoietin (THPO); or type II receptors including IFN-alpha, IFN-beta, IFN-gamma and multiple interleukins. Following ligand-binding to cell surface receptors, phosphorylates specific tyrosine residues on the cytoplasmic tails of the receptor, creating docking sites for STATs proteins. Subsequently, phosphorylates the STATs proteins once they are recruited to the receptor. Phosphorylated STATs then form homodimer or heterodimers and translocate to the nucleus to activate gene transcription. For example, cell stimulation with erythropoietin (EPO) during erythropoiesis leads to JAK2 autophosphorylation, activation, and its association with erythropoietin receptor (EPOR) that becomes phosphorylated in its cytoplasmic domain. Then, STAT5 (STAT5A or STAT5B) is recruited, phosphorylated and activated by JAK2. Once activated, dimerized STAT5 translocates into the nucleus and promotes the transcription of several essential genes involved in the modulation of erythropoiesis. Part of a signaling cascade that is activated by increased cellular retinol and that leads to the activation of STAT5 (STAT5A or STAT5B). In addition, JAK2 mediates angiotensin-2-induced ARHGEF1 phosphorylation. Plays a role in cell cycle by phosphorylating CDKN1B. Cooperates with TEC through reciprocal phosphorylation to mediate cytokine-driven activation of FOS transcription. In the nucleus, plays a key role in chromatin by specifically mediating phosphorylation of 'Tyr-41' of histone H3 (H3Y41ph), a specific tag that promotes exclusion of CBX5 (HP1 alpha) from chromatin. Up-regulates the potassium voltage-gated channel activity of KCNA3. This chain is Tyrosine-protein kinase JAK2, found in Rattus norvegicus (Rat).